Reading from the N-terminus, the 177-residue chain is Large ribosomal subunit protein uL6 (177 aa).

Belongs to the universal ribosomal protein uL6 family. As to quaternary structure, part of the 50S ribosomal subunit.

Functionally, this protein binds to the 23S rRNA, and is important in its secondary structure. It is located near the subunit interface in the base of the L7/L12 stalk, and near the tRNA binding site of the peptidyltransferase center. The protein is Large ribosomal subunit protein uL6 of Alkalilimnicola ehrlichii (strain ATCC BAA-1101 / DSM 17681 / MLHE-1).